A 109-amino-acid chain; its full sequence is ATP synthase subunit c (109 aa).

A run of 2 helical transmembrane segments spans residues 42-62 (YIGT…QGFS) and 88-108 (LALA…IIFV).

Belongs to the ATPase C chain family. As to quaternary structure, F-type ATPases have 2 components, F(1) - the catalytic core - and F(0) - the membrane proton channel. F(1) has five subunits: alpha(3), beta(3), gamma(1), delta(1), epsilon(1). F(0) has three main subunits: a(1), b(2) and c(10-14). The alpha and beta chains form an alternating ring which encloses part of the gamma chain. F(1) is attached to F(0) by a central stalk formed by the gamma and epsilon chains, while a peripheral stalk is formed by the delta and b chains.

It is found in the cell membrane. F(1)F(0) ATP synthase produces ATP from ADP in the presence of a proton or sodium gradient. F-type ATPases consist of two structural domains, F(1) containing the extramembraneous catalytic core and F(0) containing the membrane proton channel, linked together by a central stalk and a peripheral stalk. During catalysis, ATP synthesis in the catalytic domain of F(1) is coupled via a rotary mechanism of the central stalk subunits to proton translocation. In terms of biological role, key component of the F(0) channel; it plays a direct role in translocation across the membrane. A homomeric c-ring of between 10-14 subunits forms the central stalk rotor element with the F(1) delta and epsilon subunits. The protein is ATP synthase subunit c of Ureaplasma parvum serovar 3 (strain ATCC 27815 / 27 / NCTC 11736).